A 531-amino-acid polypeptide reads, in one-letter code: Splicing factor ESS-2 (531 aa).

Disordered regions lie at residues 104–163 (RTPI…RKKK) and 453–531 (PFAS…GDFF). The segment covering 105-114 (TPITTRSTTE) has biased composition (polar residues). Low complexity-rich tracts occupy residues 125–136 (TPGPSSASTSSA) and 464–477 (SRPSSSKRSTTPGS). The span at 480–498 (SRGSTTPGSSWSQGAQTPG) shows a compositional bias: polar residues.

Belongs to the ESS2 family.

The protein localises to the nucleus. Functionally, regulates pre-mRNA splicing. The sequence is that of Splicing factor ESS-2 (ess-2) from Caenorhabditis elegans.